The following is a 221-amino-acid chain: MGISRDSMHKRRATGGKQKAWRKKRKYELGRQPANTKLSSNKTVRRVRVRGGNVKWRALRLDTGNYSWGSEAVTRKTRILDVVYNASNNELVRTQTLVKSAIVQVDAAPFKQWYLTHYGVDIGRKKKTPAAKKDNAEGQEVEAAAEETKKSNHVTRKLEKRKEGRTLDPHIEEQFGSGRLLACISSRPGQCGRADGYILEGKELEFYMKKLQRKKGKSAVA.

2 disordered regions span residues 1–41 (MGIS…LSSN) and 128–169 (TPAA…TLDP). The span at 8–26 (MHKRRATGGKQKAWRKKRK) shows a compositional bias: basic residues. Positions 146 to 169 (EETKKSNHVTRKLEKRKEGRTLDP) are enriched in basic and acidic residues.

It belongs to the eukaryotic ribosomal protein eS8 family.

The protein is Small ribosomal subunit protein eS8 (RPS8) of Zea mays (Maize).